The chain runs to 158 residues: SsrA-binding protein (158 aa).

Positions 134-158 (KLHDKRETEKERDWNRQKSRLLKTG) are disordered. A compositionally biased stretch (basic and acidic residues) spans 137 to 149 (DKRETEKERDWNR).

It belongs to the SmpB family.

The protein localises to the cytoplasm. Functionally, required for rescue of stalled ribosomes mediated by trans-translation. Binds to transfer-messenger RNA (tmRNA), required for stable association of tmRNA with ribosomes. tmRNA and SmpB together mimic tRNA shape, replacing the anticodon stem-loop with SmpB. tmRNA is encoded by the ssrA gene; the 2 termini fold to resemble tRNA(Ala) and it encodes a 'tag peptide', a short internal open reading frame. During trans-translation Ala-aminoacylated tmRNA acts like a tRNA, entering the A-site of stalled ribosomes, displacing the stalled mRNA. The ribosome then switches to translate the ORF on the tmRNA; the nascent peptide is terminated with the 'tag peptide' encoded by the tmRNA and targeted for degradation. The ribosome is freed to recommence translation, which seems to be the essential function of trans-translation. The chain is SsrA-binding protein from Allorhizobium ampelinum (strain ATCC BAA-846 / DSM 112012 / S4) (Agrobacterium vitis (strain S4)).